A 1190-amino-acid polypeptide reads, in one-letter code: Laminin subunit gamma-2 (1190 aa).

Positions 1–21 (MPALWLRCGLCLALLLPAARA) are cleaved as a signal peptide. 12 cysteine pairs are disulfide-bonded: Cys-28/Cys-37, Cys-30/Cys-53, Cys-56/Cys-65, Cys-68/Cys-81, Cys-84/Cys-96, Cys-86/Cys-102, Cys-104/Cys-113, Cys-116/Cys-128, Cys-139/Cys-150, Cys-141/Cys-155, Cys-157/Cys-166, and Cys-169/Cys-184. 3 consecutive Laminin EGF-like domains span residues 28–83 (CDCN…RCLP), 84–130 (CNCN…GCAQ), and 139–186 (CDCD…GCTQ). Residues 187-196 (CFCYGHSASC) enclose the Laminin EGF-like 4; first part domain. The region spanning 213–381 (QDVDGWKAVQ…SGAPAPWVEQ (169 aa)) is the Laminin IV type A domain. N-linked (GlcNAc...) asparagine glycans are attached at residues Asn-342 and Asn-362. The Laminin EGF-like 4; second part domain maps to 382 to 415 (CVCPVGYKGQFCQDCASGYKRDSARLGPFGTCIP). Laminin EGF-like domains lie at 416–462 (CNCQ…SCKP), 463–517 (CPCR…PCQP), and 518–573 (CQCN…KCRA). 11 disulfide bridges follow: Cys-463–Cys-471, Cys-465–Cys-482, Cys-485–Cys-494, Cys-497–Cys-515, Cys-518–Cys-532, Cys-520–Cys-539, Cys-542–Cys-551, Cys-554–Cys-571, Cys-574–Cys-586, Cys-576–Cys-592, and Cys-594–Cys-603. Positions 574-603 (CNCNPVGSEPVECRSDGSCVCKPGFGGLSC) constitute a Laminin EGF-like 8; truncated domain. A domain II and I region spans residues 604–1190 (EHAALTSCPA…CYNTQALEQQ (587 aa)). A coiled-coil region spans residues 613–718 (ACYNQVKVQM…GSQYQNQVQD (106 aa)). The O-linked (Xyl...) (chondroitin sulfate) serine glycan is linked to Ser-803. Coiled coils occupy residues 809–1073 (AVVQ…AVQM) and 1114–1190 (EERL…LEQQ). N-linked (GlcNAc...) asparagine glycosylation is found at Asn-939 and Asn-1030.

As to quaternary structure, laminin is a complex glycoprotein, consisting of three different polypeptide chains (alpha, beta, gamma), which are bound to each other by disulfide bonds into a cross-shaped molecule comprising one long and three short arms with globules at each end. Gamma-2 is a subunit of laminin-5 (laminin-332 or epiligrin/kalinin/nicein). Post-translationally, O-glycosylated; contains chondroitin sulfate (CS).

It is found in the secreted. Its subcellular location is the extracellular space. It localises to the extracellular matrix. The protein localises to the basement membrane. Functionally, binding to cells via a high affinity receptor, laminin is thought to mediate the attachment, migration and organization of cells into tissues during embryonic development by interacting with other extracellular matrix components. Ladsin exerts cell-scattering activity toward a wide variety of cells, including epithelial, endothelial, and fibroblastic cells. The chain is Laminin subunit gamma-2 (LAMC2) from Equus caballus (Horse).